A 443-amino-acid polypeptide reads, in one-letter code: Histidinol dehydrogenase (443 aa).

NAD(+) contacts are provided by Tyr127, Gln185, and Asn208. Substrate contacts are provided by Ser234, Gln256, and His259. Residues Gln256 and His259 each coordinate Zn(2+). Catalysis depends on proton acceptor residues Glu323 and His324. His324, Asp357, Glu411, and His416 together coordinate substrate. Position 357 (Asp357) interacts with Zn(2+). Residue His416 coordinates Zn(2+).

It belongs to the histidinol dehydrogenase family. Zn(2+) serves as cofactor.

The catalysed reaction is L-histidinol + 2 NAD(+) + H2O = L-histidine + 2 NADH + 3 H(+). The protein operates within amino-acid biosynthesis; L-histidine biosynthesis; L-histidine from 5-phospho-alpha-D-ribose 1-diphosphate: step 9/9. In terms of biological role, catalyzes the sequential NAD-dependent oxidations of L-histidinol to L-histidinaldehyde and then to L-histidine. The protein is Histidinol dehydrogenase of Photobacterium profundum (strain SS9).